The chain runs to 79 residues: Small polypeptide DEVIL 8 (79 aa).

Over residues 1–12 (MSRLRNSAQLQL) the composition is skewed to polar residues. The disordered stretch occupies residues 1-37 (MSRLRNSAQLQLSKKESLGDNGGALNTTRSSRQKQGK). Residue N26 is glycosylated (N-linked (GlcNAc...) asparagine). A required for DVL/RTFL small polypeptide activity region spans residues 39 to 70 (GFTRKCGRLVKEQRARFYIMRRCVVMLICWTD). The helical transmembrane segment at 55–71 (FYIMRRCVVMLICWTDH) threads the bilayer. N74 carries an N-linked (GlcNAc...) asparagine glycan.

This sequence belongs to the DVL/RTFL small polypeptides family.

It is found in the cell membrane. Its function is as follows. Small polypeptide acting as a regulatory molecule which coordinates cellular responses required for differentiation, growth and development, probably by restricting polar cell proliferation in lateral organs and coordinating socket cell recruitment and differentiation at trichome sites. This chain is Small polypeptide DEVIL 8, found in Arabidopsis thaliana (Mouse-ear cress).